We begin with the raw amino-acid sequence, 336 residues long: 3-isopropylmalate dehydrogenase (336 aa).

Residues Arg87, Arg97, Arg121, and Asp211 each coordinate substrate. Mg(2+) is bound by residues Asp211, Asp235, and Asp239. Residue 271–283 participates in NAD(+) binding; sequence GSAPDIAGQGIAD.

Belongs to the isocitrate and isopropylmalate dehydrogenases family. LeuB type 2 subfamily. Homodimer. Mg(2+) serves as cofactor. It depends on Mn(2+) as a cofactor.

It is found in the cytoplasm. The enzyme catalyses (2R,3S)-3-isopropylmalate + NAD(+) = 4-methyl-2-oxopentanoate + CO2 + NADH. It functions in the pathway amino-acid biosynthesis; L-leucine biosynthesis; L-leucine from 3-methyl-2-oxobutanoate: step 3/4. In terms of biological role, catalyzes the oxidation of 3-carboxy-2-hydroxy-4-methylpentanoate (3-isopropylmalate) to 3-carboxy-4-methyl-2-oxopentanoate. The product decarboxylates to 4-methyl-2 oxopentanoate. The polypeptide is 3-isopropylmalate dehydrogenase (Rhodococcus opacus (strain B4)).